The primary structure comprises 184 residues: MESELGFLVSVVIICADITATVLGIEAEIAQSKAPHHHHQQHSRHSGSGCRRSPSDGAFAEGVAAMVLLFIVHVLANVLGGCTYIRSKQDFKRATANKILAVAFLVLSWIFFVVSYSTLMIGTLANSRTNRLCSLPHRWFFLIGGIFCLGHGVVTSAYYVSAIAAKKEDKENAQQENLANRSRA.

The signal sequence occupies residues 1 to 24 (MESELGFLVSVVIICADITATVLG). The span at 34-45 (APHHHHQQHSRH) shows a compositional bias: basic residues. The segment at 34–53 (APHHHHQQHSRHSGSGCRRS) is disordered. 3 consecutive transmembrane segments (helical) span residues 62-82 (GVAA…LGGC), 99-119 (ILAV…YSTL), and 140-160 (FFLI…AYYV). Asparagine 180 carries N-linked (GlcNAc...) asparagine glycosylation.

Belongs to the DESIGUAL family. In terms of tissue distribution, mainly expressed in roots, inflorescences and developing leaves, and, at low levels, in mature leaves.

It localises to the endoplasmic reticulum membrane. Its function is as follows. Involved, partially redundantly with VCC/DEAL1 and DEAL2, to ensure bilateral symmetry development and early leaf margin patterning, probably via the regulation of auxin and CUC2 distribution. The protein is Protein DESIGUAL 3 of Arabidopsis thaliana (Mouse-ear cress).